We begin with the raw amino-acid sequence, 108 residues long: uncharacterized protein (108 aa).

A helical transmembrane segment spans residues 25-45 (VILKSFLLISSWVILVLLLVI).

The protein resides in the membrane. This is an uncharacterized protein from Saccharomyces cerevisiae (strain ATCC 204508 / S288c) (Baker's yeast).